Consider the following 128-residue polypeptide: Large ribosomal subunit protein bL12 (128 aa).

This sequence belongs to the bacterial ribosomal protein bL12 family. As to quaternary structure, homodimer. Part of the ribosomal stalk of the 50S ribosomal subunit. Forms a multimeric L10(L12)X complex, where L10 forms an elongated spine to which 2 to 4 L12 dimers bind in a sequential fashion. Binds GTP-bound translation factors.

In terms of biological role, forms part of the ribosomal stalk which helps the ribosome interact with GTP-bound translation factors. Is thus essential for accurate translation. This Corynebacterium aurimucosum (strain ATCC 700975 / DSM 44827 / CIP 107346 / CN-1) (Corynebacterium nigricans) protein is Large ribosomal subunit protein bL12.